The sequence spans 77 residues: RNA-binding protein Hfq (77 aa).

In terms of domain architecture, Sm spans 10–70 (DIFLNSARKN…ITTVTPEKPI (61 aa)).

This sequence belongs to the Hfq family. As to quaternary structure, homohexamer.

Functionally, RNA chaperone that binds small regulatory RNA (sRNAs) and mRNAs to facilitate mRNA translational regulation in response to envelope stress, environmental stress and changes in metabolite concentrations. Also binds with high specificity to tRNAs. This Clostridium botulinum (strain Eklund 17B / Type B) protein is RNA-binding protein Hfq.